A 383-amino-acid polypeptide reads, in one-letter code: Chaperone protein DnaJ (383 aa).

A J domain is found at aspartate 5–glycine 69. A CR-type zinc finger spans residues glycine 138–arginine 222. Cysteine 151, cysteine 154, cysteine 168, cysteine 171, cysteine 194, cysteine 197, cysteine 210, and cysteine 213 together coordinate Zn(2+). CXXCXGXG motif repeat units follow at residues cysteine 151–glycine 158, cysteine 168–glycine 175, cysteine 194–glycine 201, and cysteine 210–glycine 217.

This sequence belongs to the DnaJ family. Homodimer. Zn(2+) is required as a cofactor.

It localises to the cytoplasm. Its function is as follows. Participates actively in the response to hyperosmotic and heat shock by preventing the aggregation of stress-denatured proteins and by disaggregating proteins, also in an autonomous, DnaK-independent fashion. Unfolded proteins bind initially to DnaJ; upon interaction with the DnaJ-bound protein, DnaK hydrolyzes its bound ATP, resulting in the formation of a stable complex. GrpE releases ADP from DnaK; ATP binding to DnaK triggers the release of the substrate protein, thus completing the reaction cycle. Several rounds of ATP-dependent interactions between DnaJ, DnaK and GrpE are required for fully efficient folding. Also involved, together with DnaK and GrpE, in the DNA replication of plasmids through activation of initiation proteins. The protein is Chaperone protein DnaJ of Limosilactobacillus reuteri (strain DSM 20016) (Lactobacillus reuteri).